Consider the following 1025-residue polypeptide: MMQPTPAPSSAPGSPQRTQAEPEMETPSYPQPPQNVGTAPFSVLVKLFEKLATERKQERRRKLLDAWFRHWRREKGFDLYPVLRLLLPQKDRDRAVYGLKEKNLAKTYIKLIPLGMRDPDAIRLLNWKKPTERDKSSGDFPQVLCEVVSKRSSVIEGTLTIDELNEILDDIAKNMGKSDVQSKILRRIYNNSTADEQRWIIRIILKDMNISVKETTVFAVFHPDAQDLYNTCSDLKKVAWELWDPSRRLNAKDKEIQIFHAFAPMLCKRPTRKIEETVKAMGGSKFIIEEKLDGERMQLHKRGNEYFYCSRKGKDYTYLYGKHIGAGSLTPFIDSAFDSRIDDIILDGEMLVWDPVSERNLPFGTLKTAALDRSKKENNPRPCFKVFDLLYLNGMSLLDKTVKFRKNNLRHCIKPIPGRIEFVEEYQGETANDIRKRMEQVMENRGEGLVIKHPKAKYILNGRNTDWIKVKPEYMDNMGETVDVLVVAGNYGSGKRGGGVSTLICAVMDDRRPDSDDEPKYSSFVRIGTGLSFADYVWVRSKPWKVWDPKNPPEFLQTAKKGQEDKGDVYLEPEDSFILKVKAAEITPSDQYHMGFTMRFPRALAIRDDLSIADCMTATEVFESLKSERKRKMEDDAGITTKKRKTTVKKVALLPEYSGPNLKKVAVKTDIFNGMKFVVFSDPKSRTGEADKKELMKTIHANGGTCSQIVNKNSEAIVIYGGSITPYDLKLVIDKGIHDVIKPSWITDSVTLGEPAPFKKKYFFHATEERKYADEYNEDDGEEEGAVPSADEQERDVKSGTVEPGSETEDEDEEQAPEIKEEQDGELHEWLKVDDRKSPALPAHDEEDSVTEDDSDNADVADEEEPDLDDWFQVKGETEDEGAGALATASRHRETTPDVDGDVKMGESEEAMDYDPDVIFKHLCFYLDSPANAQRHGMATRPKYEAAITKSFEEVEKLIKDNGGKIVDLDEPKLTHVVLDKRDDSRRVELMKRTSKPRRRHLVLSDYIEACIDEGTLLDEEGESF.

The interval 1-36 (MMQPTPAPSSAPGSPQRTQAEPEMETPSYPQPPQNV) is disordered. Residues Glu289, Lys291, Leu292, Arg296, Glu349, Phe387, Glu447, Lys452, Lys469, and Lys471 each contribute to the ATP site. Catalysis depends on Lys291, which acts as the N6-AMP-lysine intermediate. Glu349 serves as a coordination point for Mg(2+). Mg(2+) is bound at residue Glu447. In terms of domain architecture, BRCT 1 spans 667 to 763 (VKTDIFNGMK…EPAPFKKKYF (97 aa)). Residues 773 to 904 (ADEYNEDDGE…TTPDVDGDVK (132 aa)) form a disordered region. Acidic residues-rich tracts occupy residues 775-785 (EYNEDDGEEEG) and 806-816 (SETEDEDEEQA). Residues 817-838 (PEIKEEQDGELHEWLKVDDRKS) are compositionally biased toward basic and acidic residues. Residues 845–870 (DEEDSVTEDDSDNADVADEEEPDLDD) show a composition bias toward acidic residues. Positions 891 to 904 (RHRETTPDVDGDVK) are enriched in basic and acidic residues. One can recognise a BRCT 2 domain in the interval 915 to 1025 (DPDVIFKHLC…TLLDEEGESF (111 aa)).

The protein belongs to the ATP-dependent DNA ligase family. Mg(2+) serves as cofactor.

It is found in the nucleus. The catalysed reaction is ATP + (deoxyribonucleotide)n-3'-hydroxyl + 5'-phospho-(deoxyribonucleotide)m = (deoxyribonucleotide)n+m + AMP + diphosphate.. Functionally, DNA ligase involved in DNA non-homologous end joining (NHEJ); required for double-strand break (DSB) repair. The polypeptide is DNA ligase 4 (LIG4) (Coprinopsis cinerea (strain Okayama-7 / 130 / ATCC MYA-4618 / FGSC 9003) (Inky cap fungus)).